We begin with the raw amino-acid sequence, 145 residues long: Large ribosomal subunit protein uL13 (145 aa).

It belongs to the universal ribosomal protein uL13 family. As to quaternary structure, part of the 50S ribosomal subunit.

Its function is as follows. This protein is one of the early assembly proteins of the 50S ribosomal subunit, although it is not seen to bind rRNA by itself. It is important during the early stages of 50S assembly. The polypeptide is Large ribosomal subunit protein uL13 (Macrococcus caseolyticus (strain JCSC5402) (Macrococcoides caseolyticum)).